Here is a 481-residue protein sequence, read N- to C-terminus: Sestrin-1 (481 aa).

Residues 63–244 (FADAFTDLGR…ICDITNGNHG (182 aa)) are N-terminal domain; may mediate the alkylhydroperoxide reductase activity. The active-site Cysteine sulfenic acid (-SOH) intermediate is the cysteine 122. Residues 295-316 (KTESMVFSTEDEDPPPDIDVSR) are disordered. Positions 310–481 (PDIDVSRHFE…ALRAITRYMT (172 aa)) are C-terminal domain; mediates TORC1 regulation. L-leucine-binding positions include 375–378 (TYNT), threonine 387, and glutamate 452.

This sequence belongs to the sestrin family.

The protein localises to the nucleus. It is found in the cytoplasm. It carries out the reaction a hydroperoxide + L-cysteinyl-[protein] = S-hydroxy-L-cysteinyl-[protein] + an alcohol. Functionally, may function as an intracellular leucine sensor that negatively regulates the TORC1 signaling pathway through the GATOR complex. In absence of leucine, binds the GATOR subcomplex GATOR2 and prevents TORC1 signaling. Binding of leucine to SESN2 disrupts its interaction with GATOR2 thereby activating the TORC1 signaling pathway. This stress-inducible metabolic regulator may also play a role in protection against oxidative and genotoxic stresses. May prevent the accumulation of reactive oxygen species (ROS) through the alkylhydroperoxide reductase activity born by the N-terminal domain of the protein. The sequence is that of Sestrin-1 from Xenopus laevis (African clawed frog).